A 389-amino-acid chain; its full sequence is Serpentine receptor class alpha/beta-14 (389 aa).

Residues 1–45 (MPSDDFVKTARKALISHSVSIQNYTEDDCQIAFHATTNSFMQTIR) are Extracellular-facing. N-linked (GlcNAc...) asparagine glycosylation occurs at Asn23. A helical membrane pass occupies residues 46–66 (LVHIFFCTFGAISSSLFIYVL). The Cytoplasmic portion of the chain corresponds to 67–81 (LNSSSRNLHRNLRIS). The helical transmembrane segment at 82-102 (LASLAFAALIACLQLDFIAFY) threads the bilayer. The Extracellular portion of the chain corresponds to 103–123 (HLALTLTADNACDSMYEARKC). An intrachain disulfide couples Cys123 to Cys198. The chain crosses the membrane as a helical span at residues 124 to 144 (AILRFPVVLSIYATLCGIIVL). The Cytoplasmic portion of the chain corresponds to 145 to 167 (AIERTIATLKYKTYEANGSRVVG). A helical membrane pass occupies residues 168 to 188 (LVLVTGQWFVCIIVAVFSVLL). Residues 189–208 (RSDPGYVHYCTAYVSHPRTS) lie on the Extracellular side of the membrane. Residues 209–229 (VFSLCFMSALEVATLVYFVLL) traverse the membrane as a helical segment. Residues 230-268 (LQSNQRRQVNEFVNKAMHSLSERYQLQENVRIMKILIPS) are Cytoplasmic-facing. The helical transmembrane segment at 269–289 (ITVHAILGFIGLGSMLAFAII) threads the bilayer. Topologically, residues 290-303 (YRYADERLIVGFAP) are extracellular. A helical transmembrane segment spans residues 304–324 (FSEVVLLVIPIYAVVFPIVAV). Over 325–389 (VQNKQLRLAS…FDLLNEMWKK (65 aa)) the chain is Cytoplasmic.

Belongs to the nematode receptor-like protein srab family.

The protein resides in the membrane. The polypeptide is Serpentine receptor class alpha/beta-14 (Caenorhabditis elegans).